The following is a 162-amino-acid chain: MTPSPDTALLGRLRDLLEPVAAGCGLHLEDVAVSPAGRRRRVRVTLDLADGPGALGSNDLADASRAVSAALDDADVVTGPYVLEVSTPGTDRPLTQPRHFRRAQGRLVTLTLAAGTHVSGRLLSADDDGIHVRTDAGATTTFAYADVATGRVEVELRHLEEG.

The protein belongs to the RimP family.

The protein resides in the cytoplasm. Functionally, required for maturation of 30S ribosomal subunits. This Beutenbergia cavernae (strain ATCC BAA-8 / DSM 12333 / CCUG 43141 / JCM 11478 / NBRC 16432 / NCIMB 13614 / HKI 0122) protein is Ribosome maturation factor RimP.